The following is a 348-amino-acid chain: S-adenosylmethionine:tRNA ribosyltransferase-isomerase (348 aa).

It belongs to the QueA family. As to quaternary structure, monomer.

The protein localises to the cytoplasm. The enzyme catalyses 7-aminomethyl-7-carbaguanosine(34) in tRNA + S-adenosyl-L-methionine = epoxyqueuosine(34) in tRNA + adenine + L-methionine + 2 H(+). It functions in the pathway tRNA modification; tRNA-queuosine biosynthesis. Transfers and isomerizes the ribose moiety from AdoMet to the 7-aminomethyl group of 7-deazaguanine (preQ1-tRNA) to give epoxyqueuosine (oQ-tRNA). This chain is S-adenosylmethionine:tRNA ribosyltransferase-isomerase, found in Polynucleobacter asymbioticus (strain DSM 18221 / CIP 109841 / QLW-P1DMWA-1) (Polynucleobacter necessarius subsp. asymbioticus).